We begin with the raw amino-acid sequence, 81 residues long: Defensin-like protein 45 (81 aa).

Residues 1 to 27 form the signal peptide; that stretch reads MAITKTSATFVLLIILAASLSNFNVLA. Cystine bridges form between C40/C79, C44/C67, C53/C77, and C57/C78.

It belongs to the DEFL family.

Its subcellular location is the secreted. The sequence is that of Defensin-like protein 45 from Arabidopsis thaliana (Mouse-ear cress).